Reading from the N-terminus, the 402-residue chain is Formate-dependent phosphoribosylglycinamide formyltransferase (402 aa).

N(1)-(5-phospho-beta-D-ribosyl)glycinamide is bound by residues 22–23 and Glu-82; that span reads EL. ATP-binding positions include Arg-115, Lys-160, 165–170, 200–203, and Glu-208; these read SSGKGQ and EGFV. Positions 120–318 constitute an ATP-grasp domain; the sequence is RLAAETLGLP…EFELHARAIL (199 aa). Mg(2+) is bound by residues Glu-277 and Glu-289. N(1)-(5-phospho-beta-D-ribosyl)glycinamide is bound by residues Asp-296, Lys-365, and 372 to 373; that span reads RR.

The protein belongs to the PurK/PurT family. As to quaternary structure, homodimer.

The catalysed reaction is N(1)-(5-phospho-beta-D-ribosyl)glycinamide + formate + ATP = N(2)-formyl-N(1)-(5-phospho-beta-D-ribosyl)glycinamide + ADP + phosphate + H(+). It functions in the pathway purine metabolism; IMP biosynthesis via de novo pathway; N(2)-formyl-N(1)-(5-phospho-D-ribosyl)glycinamide from N(1)-(5-phospho-D-ribosyl)glycinamide (formate route): step 1/1. Its function is as follows. Involved in the de novo purine biosynthesis. Catalyzes the transfer of formate to 5-phospho-ribosyl-glycinamide (GAR), producing 5-phospho-ribosyl-N-formylglycinamide (FGAR). Formate is provided by PurU via hydrolysis of 10-formyl-tetrahydrofolate. This chain is Formate-dependent phosphoribosylglycinamide formyltransferase, found in Mycobacteroides abscessus (strain ATCC 19977 / DSM 44196 / CCUG 20993 / CIP 104536 / JCM 13569 / NCTC 13031 / TMC 1543 / L948) (Mycobacterium abscessus).